The chain runs to 162 residues: Transcription antitermination protein NusB (162 aa).

This sequence belongs to the NusB family.

In terms of biological role, involved in transcription antitermination. Required for transcription of ribosomal RNA (rRNA) genes. Binds specifically to the boxA antiterminator sequence of the ribosomal RNA (rrn) operons. The protein is Transcription antitermination protein NusB of Mycobacterium sp. (strain JLS).